The primary structure comprises 474 residues: MTKPTTMAIFLSIVLLSMAQLPSLVAGTGRPRVIIIGAGISGISAGKRLSEAGITDILILEATDHIGGRMHKQRFAGVNVEIGANWVEGVNGEKMNPIWPIVNSTLKLRNFLSDFDSLAQNVYKDGGLCDAAYVQKRIDLADEADKSGENLSATLHPSGRDDMSILSMQRLNNHLPNGPSSPVDMVVDYFTYDYEFAEPPRVTSLRNTVPLPTFTDFGDDNYFVADQRGYEAVVYYLAGQYLEADKSGNIVDARLQLNKVVREISYSSTGVTVKTEDNSTYQADYVMVSASLGVLQSDLIQFKPQLPSWKILAIYQFDMAVYTKIFVKFPKKFWPEGAGREFFLYASTRRGYYGVWQEFEKQYPDANVLLVTVTDEESRRIEQQPDSQTKAEIMEVVRSMFPDEDVPDATDILVPRWWSDRFFQGSFSNWPIGVSRYEHDQLRAPVGRVYFTGEHTSERYNGYVHGAYLAGIYA.

The N-terminal stretch at 1–27 (MTKPTTMAIFLSIVLLSMAQLPSLVAG) is a signal peptide. FAD-binding residues include Glu61 and Arg69. N-linked (GlcNAc...) asparagine glycans are attached at residues Asn103 and Asn150. Residue Val261 coordinates FAD. Asn278 is a glycosylation site (N-linked (GlcNAc...) asparagine). FAD is bound at residue Glu454.

This sequence belongs to the flavin monoamine oxidase family. Requires FAD as cofactor.

It is found in the secreted. Its subcellular location is the extracellular space. The protein resides in the apoplast. It catalyses the reaction spermine + O2 + H2O = 3-aminopropanal + spermidine + H2O2. The enzyme catalyses N(1)-acetylspermine + O2 + H2O = 3-acetamidopropanal + spermidine + H2O2. The catalysed reaction is norspermine + O2 + H2O = norspermidine + 3-aminopropanal + H2O2. It carries out the reaction spermidine + O2 + H2O = 3-aminopropanal + putrescine + H2O2. It catalyses the reaction N(1)-acetylspermidine + O2 + H2O = 3-acetamidopropanal + putrescine + H2O2. The enzyme catalyses thermospermine + O2 + H2O = 3-aminopropanal + spermidine + H2O2. It functions in the pathway amine and polyamine degradation; spermidine degradation. It participates in amine and polyamine degradation; spermine degradation. Its function is as follows. Flavoenzyme involved in polyamine back-conversion. Catalyzes the oxidation of the secondary amino group of polyamines, such as spermine, spermidine and their acetyl derivatives. Substrate preference is spermine &gt; spermidine &gt; N(1)-acetylspermine &gt; N(1)-acetylspermidine &gt; norspermine &gt; thermospermine. No activity detected when putrescine is used as substrate. May play a role in producing hydrogen peroxide for secondary wall thickening through lignin formation during anther development. In Oryza sativa subsp. japonica (Rice), this protein is Polyamine oxidase 7.